Consider the following 101-residue polypeptide: Large ribosomal subunit protein uL23 (101 aa).

Belongs to the universal ribosomal protein uL23 family. As to quaternary structure, part of the 50S ribosomal subunit. Contacts protein L29, and trigger factor when it is bound to the ribosome.

One of the early assembly proteins it binds 23S rRNA. One of the proteins that surrounds the polypeptide exit tunnel on the outside of the ribosome. Forms the main docking site for trigger factor binding to the ribosome. This is Large ribosomal subunit protein uL23 from Synechocystis sp. (strain ATCC 27184 / PCC 6803 / Kazusa).